The sequence spans 234 residues: Adenosine 5'-phosphosulfate reductase (234 aa).

[4Fe-4S] cluster-binding residues include C120, C121, C203, and C206. C229 functions as the Nucleophile; cysteine thiosulfonate intermediate in the catalytic mechanism.

Belongs to the PAPS reductase family. CysH subfamily. [4Fe-4S] cluster is required as a cofactor.

The protein localises to the cytoplasm. It carries out the reaction [thioredoxin]-disulfide + sulfite + AMP + 2 H(+) = adenosine 5'-phosphosulfate + [thioredoxin]-dithiol. It participates in sulfur metabolism; hydrogen sulfide biosynthesis; sulfite from sulfate. Its function is as follows. Catalyzes the formation of sulfite from adenosine 5'-phosphosulfate (APS) using thioredoxin as an electron donor. This is Adenosine 5'-phosphosulfate reductase from Bacillus cereus (strain AH187).